The primary structure comprises 817 residues: DNA gyrase subunit A (817 aa).

One can recognise a Topo IIA-type catalytic domain in the interval 39–505; that stretch reads LPDARDGLKP…AVEDVSIEDL (467 aa). Y127 (O-(5'-phospho-DNA)-tyrosine intermediate) is an active-site residue. Residues 532-538 carry the GyrA-box motif; sequence QGRGGKG.

The protein belongs to the type II topoisomerase GyrA/ParC subunit family. Heterotetramer, composed of two GyrA and two GyrB chains. In the heterotetramer, GyrA contains the active site tyrosine that forms a transient covalent intermediate with DNA, while GyrB binds cofactors and catalyzes ATP hydrolysis.

It is found in the cytoplasm. It catalyses the reaction ATP-dependent breakage, passage and rejoining of double-stranded DNA.. Its function is as follows. A type II topoisomerase that negatively supercoils closed circular double-stranded (ds) DNA in an ATP-dependent manner to modulate DNA topology and maintain chromosomes in an underwound state. Negative supercoiling favors strand separation, and DNA replication, transcription, recombination and repair, all of which involve strand separation. Also able to catalyze the interconversion of other topological isomers of dsDNA rings, including catenanes and knotted rings. Type II topoisomerases break and join 2 DNA strands simultaneously in an ATP-dependent manner. The protein is DNA gyrase subunit A of Aminobacterium colombiense (strain DSM 12261 / ALA-1).